The chain runs to 421 residues: Enolase (421 aa).

Glu207 functions as the Proton donor in the catalytic mechanism. 3 residues coordinate Mg(2+): Asp244, Glu285, and Asp312. The active-site Proton acceptor is the Lys337. (2R)-2-phosphoglycerate is bound by residues Lys337, Arg366, Ser367, and Lys388.

Belongs to the enolase family. It depends on Mg(2+) as a cofactor.

The protein resides in the cytoplasm. It localises to the secreted. Its subcellular location is the cell surface. The enzyme catalyses (2R)-2-phosphoglycerate = phosphoenolpyruvate + H2O. It functions in the pathway carbohydrate degradation; glycolysis; pyruvate from D-glyceraldehyde 3-phosphate: step 4/5. In terms of biological role, catalyzes the reversible conversion of 2-phosphoglycerate (2-PG) into phosphoenolpyruvate (PEP). It is essential for the degradation of carbohydrates via glycolysis. This Ehrlichia ruminantium (strain Gardel) protein is Enolase.